A 111-amino-acid chain; its full sequence is UPF0145 protein BMA10229_A0446 (111 aa).

The protein belongs to the UPF0145 family.

The sequence is that of UPF0145 protein BMA10229_A0446 from Burkholderia mallei (strain NCTC 10229).